A 320-amino-acid chain; its full sequence is Cytochrome f (320 aa).

A signal peptide spans 1–35; the sequence is MQNRKTFSWVKEQMTRSIYVSIMIYVITRASISNA. The heme site is built by Y36, C56, C59, and H60. Residues 286 to 306 form a helical membrane-spanning segment; it reads VQGLLFFLASVILAQIFLVLK.

This sequence belongs to the cytochrome f family. The 4 large subunits of the cytochrome b6-f complex are cytochrome b6, subunit IV (17 kDa polypeptide, petD), cytochrome f and the Rieske protein, while the 4 small subunits are PetG, PetL, PetM and PetN. The complex functions as a dimer. Requires heme as cofactor.

The protein resides in the plastid. It localises to the chloroplast thylakoid membrane. Component of the cytochrome b6-f complex, which mediates electron transfer between photosystem II (PSII) and photosystem I (PSI), cyclic electron flow around PSI, and state transitions. In Phalaenopsis aphrodite subsp. formosana (Moth orchid), this protein is Cytochrome f.